Consider the following 548-residue polypeptide: Leucine-rich repeat LGI family member 3 (548 aa).

A signal peptide spans 1 to 30; the sequence is MAGLRARRGPGRRLLVLSTLGFCLMLQVSA. The LRRNT domain occupies 31-64; sequence KRPPKTPPCPPSCSCTRDTAFCVDSKSVPKNLPS. 3 LRR repeats span residues 89 to 110, 113 to 134, and 137 to 158; these read LLQF…AFIG, HLQY…TFRG, and SLTH…IFRP. One can recognise an LRRCT domain in the interval 170 to 220; the sequence is NALNCDCKVKWLVEWLAHTNTTVAPIYCASPPRFQEHKVQDLPLREFDCIT. N-linked (GlcNAc...) asparagine glycosylation is present at asparagine 189. EAR repeat units follow at residues 222 to 264 and 268 to 310; these read DFVL…KWDY and QLRD…HWDP. Asparagine 311 is a glycosylation site (N-linked (GlcNAc...) asparagine). EAR repeat units lie at residues 314–361, 363–406, 410–453, 455–497, and 501–543; these read RFTK…RWHQ, GFYS…QWSR, QFVA…RWEG, RFSE…QWDE, and KFVR…RHVV.

In terms of assembly, interacts with STX1A. As to expression, brain.

It localises to the secreted. It is found in the cytoplasmic vesicle. The protein resides in the secretory vesicle. The protein localises to the synaptic vesicle. Its subcellular location is the synapse. It localises to the synaptosome. It is found in the cell projection. The protein resides in the axon. May participate in the regulation of neuronal exocytosis. The protein is Leucine-rich repeat LGI family member 3 (Lgi3) of Mus musculus (Mouse).